A 272-amino-acid polypeptide reads, in one-letter code: HMP-PP phosphatase (272 aa).

Asp-8 functions as the Nucleophile in the catalytic mechanism. The Mg(2+) site is built by Asp-8, Asp-10, and Asp-212.

Belongs to the HAD-like hydrolase superfamily. Cof family. Requires Mg(2+) as cofactor.

The enzyme catalyses 4-amino-2-methyl-5-(diphosphooxymethyl)pyrimidine + H2O = 4-amino-2-methyl-5-(phosphooxymethyl)pyrimidine + phosphate + H(+). Catalyzes the hydrolysis of 4-amino-2-methyl-5-hydroxymethylpyrimidine pyrophosphate (HMP-PP) to 4-amino-2-methyl-5-hydroxymethylpyrimidine phosphate (HMP-P). This chain is HMP-PP phosphatase, found in Escherichia coli O8 (strain IAI1).